The sequence spans 366 residues: MVAGSGRTYRTVYRHLLTRVDPEVAHRWAFAGMRAASRVPVAPHVLRRAFVEPDPRLRTRVLGIDFPTPLGLAAGFDKNATGISALGNFGFSCVEIGTVTARPQPGNPKPRLHRLVADRAVVNRMGFNNAGAEVVARRLRQLRAVPPVHPVVIGVNIGKSKVVAEADAAQDYATSARLLAPYADYLVVNVSSPNTPGLRDLQAVEKLRPVLRAVREAADGAAHRHVPLLVKIAPDLSDEDVDAVADLAVEEELDGIVATNTTISREGLRSPAALVAAAGGGGLSGAPLKERSLEVLHRLAARTRGSLVLVSVGGIETAQDIAERLDAGASLVQAYTAFIYEGPGWARRVLGELAASRSRRETDRPS.

FMN contacts are provided by residues 74–78 and Thr98; that span reads AGFDK. Lys78 is a binding site for substrate. Position 123–127 (123–127) interacts with substrate; it reads NRMGF. FMN is bound by residues Asn156 and Asn189. Asn189 serves as a coordination point for substrate. Residue Ser192 is the Nucleophile of the active site. Residue Asn194 participates in substrate binding. FMN contacts are provided by Lys231 and Thr259. A substrate-binding site is contributed by 260-261; it reads NT. Residues Gly285, Gly314, and 335-336 contribute to the FMN site; that span reads YT.

This sequence belongs to the dihydroorotate dehydrogenase family. Type 2 subfamily. Monomer. Requires FMN as cofactor.

It localises to the cell membrane. It catalyses the reaction (S)-dihydroorotate + a quinone = orotate + a quinol. Its pathway is pyrimidine metabolism; UMP biosynthesis via de novo pathway; orotate from (S)-dihydroorotate (quinone route): step 1/1. Functionally, catalyzes the conversion of dihydroorotate to orotate with quinone as electron acceptor. This is Dihydroorotate dehydrogenase (quinone) from Kineococcus radiotolerans (strain ATCC BAA-149 / DSM 14245 / SRS30216).